The chain runs to 257 residues: 1-(5-phosphoribosyl)-5-[(5-phosphoribosylamino)methylideneamino] imidazole-4-carboxamide isomerase (257 aa).

Residue D8 is the Proton acceptor of the active site. D129 (proton donor) is an active-site residue.

The protein belongs to the HisA/HisF family.

The protein resides in the cytoplasm. The catalysed reaction is 1-(5-phospho-beta-D-ribosyl)-5-[(5-phospho-beta-D-ribosylamino)methylideneamino]imidazole-4-carboxamide = 5-[(5-phospho-1-deoxy-D-ribulos-1-ylimino)methylamino]-1-(5-phospho-beta-D-ribosyl)imidazole-4-carboxamide. It functions in the pathway amino-acid biosynthesis; L-histidine biosynthesis; L-histidine from 5-phospho-alpha-D-ribose 1-diphosphate: step 4/9. This is 1-(5-phosphoribosyl)-5-[(5-phosphoribosylamino)methylideneamino] imidazole-4-carboxamide isomerase from Nostoc punctiforme (strain ATCC 29133 / PCC 73102).